Reading from the N-terminus, the 230-residue chain is Cytidylate kinase (230 aa).

Residue 12–20 participates in ATP binding; that stretch reads GPSGAGKGT.

This sequence belongs to the cytidylate kinase family. Type 1 subfamily.

The protein resides in the cytoplasm. The catalysed reaction is CMP + ATP = CDP + ADP. The enzyme catalyses dCMP + ATP = dCDP + ADP. The chain is Cytidylate kinase from Shewanella piezotolerans (strain WP3 / JCM 13877).